The primary structure comprises 1432 residues: MDEDLMGFFDFSKEFKRTEAPKGCISSNFVGLGTEKEKTKPPKQENLGTEYVKEIVDREKQNLESLGIGGSAAKRNRTLDDIDSDNEECYEAPDLRLDEEFYSKYYFDLNRDKTLPIYTQRDQIMKAIRENTVVILKGETGCGKTTQVPQYIIDEAYQNRQYCNIVVTQPRRIAAISIANRVSQERHWEPGTVCSYQVGLHRQSGSEDARLLYCTTGVLLNFLINHKTLTHYTHIVLDEVHERDQEMDFLLIVVRRLLATNSRHVKVILMSATIDSREFVQYFATKNGIPPVINASHGRKYPLVKFYRDQLKNMQWQEDQPNPDEPGMGSHGYSAAIKILLVIDNMERRTEGQSQRSYEENLKTGSVLIFLPGINEIDNMAESIDHVMQENPALKVSIIRCHSLMTPDSQRDVFASPPVGYRKIILTTNIAESSITVPDVSYVIDFCLAKVLVTDTATNFSSLRLVWASKSNCRQRAGRVGRLRSGRVYRMVPKSFYMKHMLEFGVPEMLRSPLESSVLKAKELNMGPPIEMLALALSPPKLSDIRNTILLLKEVGALYPTVDGNYVELDGDLTPWGSIMTRLPLDIRLSRLVLLGYVFNCLDEAIVMAAGLSVRGLYLQEAGFQSYEAYWMHYVFADGSSSDLVAIWRFYKTYLNMCENRIMQESAAQWARRYHISLRSLKEMHLLVQELQYRCNKLRLHPVQLQSCQIKDDRERALILKILIAGAFYPNYFIRSNKFNPDYGRNTYQVLGGYDPCRTVYFTHFEPRYMGELYTRRIKDLFSEAKIPPENMDVNFQVGSEKIFVTFKQTEDEMDQLNLIQVPGRILTDVYKAVRLRIGKQYRPIRVMELPHAIQYVQENKIGTVIEGQWHPPSKPFNAGLMALPSVYDKNMIGYITHIVSCGKFFFQPLELADSITNMSEHINSPKNLSHYVVDAGSITKNLKLLAKRVDDFQRAQVIRVETHSHQYPKFRVRFIDYGDIAVVPMDQLRFMSNQLKREYDDLPPRCFECRLALVQPAALTSNYNRWPIKANEMVRKIAMDGRVEMEIYSLVNNVAAVFIKMREGVLNDKLVEKNYARRSDEDFASIQDHDFRLRKQERSFHVPRAERKQVNEEYLRVSRLPQDADLSPPPMHKCQTVVRLKGPYSPLEASMFSTIRASACKTVRIDPLSVNSVLLDSNPQDRHDQLIVSASVTTSNNNQVLTVRGSTVMPNTHGFGALMALIFCPTVQIKCNKECTKFVSLLAGLGYNPETMEPYYEDHDVVMNLDVNLLEDDVRLINQMRYNIDTIFFKYEGEDAPAVSEGDRSIVFNQLRCLLSRLLSKDRCYIEPHSSNLDNVWEKLDNLEPQSEPYGKRAIFPMHTIPELQNEDTTARLVLQENCKRLYSWRTFDGVLQPLDCKLCNQRLETVSQLRLHLLSQLHRDREKQIGFQDN.

The 168-residue stretch at 125–292 folds into the Helicase ATP-binding domain; that stretch reads MKAIRENTVV…FATKNGIPPV (168 aa). 138–145 lines the ATP pocket; sequence GETGCGKT. Positions 238–241 match the DEAH box motif; the sequence is DEVH. One can recognise a Helicase C-terminal domain in the interval 342–525; that stretch reads VIDNMERRTE…SSVLKAKELN (184 aa). The region spanning 936–999 is the Tudor domain; sequence AGSITKNLKL…RFMSNQLKRE (64 aa).

Belongs to the DEAD box helicase family. DEAH subfamily.

The protein resides in the cytoplasm. It carries out the reaction ATP + H2O = ADP + phosphate + H(+). Its function is as follows. Probable ATP-binding RNA helicase which plays a central role during spermatogenesis and oogenesis by repressing transposable elements and preventing their mobilization, which is essential for the germline integrity. Acts via the piRNA metabolic process, which mediates the repression of transposable elements during meiosis by forming complexes composed of piRNAs and Piwi and govern the methylation and subsequent repression of transposons. Involved in the repression of LTR retrotransposon copia. Also involved in telomere regulation by repressing specialized telomeric retroelements HeT-A, TAHRE, and TART; Drosophila telomeres being maintained by transposition of specialized telomeric retroelements. Involved in telomeric trans-silencing, a repression mechanism by which a transposon or a transgene inserted in subtelomeric heterochromatin has the capacity to repress in trans in the female germline, a homologous transposon, or transgene located in euchromatin. Involved in the repression of testis-expressed Stellate genes by the homologous Su(Ste) repeats. Required for anteroposterior and dorsoventral axis formation during oogenesis. This Drosophila willistoni (Fruit fly) protein is Probable ATP-dependent RNA helicase spindle-E (spn-E).